We begin with the raw amino-acid sequence, 454 residues long: UDP-N-acetylmuramate--L-alanine ligase (454 aa).

Residue 113–119 (GSHGKTT) coordinates ATP.

It belongs to the MurCDEF family.

It localises to the cytoplasm. The enzyme catalyses UDP-N-acetyl-alpha-D-muramate + L-alanine + ATP = UDP-N-acetyl-alpha-D-muramoyl-L-alanine + ADP + phosphate + H(+). The protein operates within cell wall biogenesis; peptidoglycan biosynthesis. Its function is as follows. Cell wall formation. The chain is UDP-N-acetylmuramate--L-alanine ligase from Aquifex aeolicus (strain VF5).